The following is a 256-amino-acid chain: Low molecular mass lipoprotein 3 (256 aa).

Residues 1–17 (MKPAIVILCLFVASLYA) form the signal peptide.

This sequence belongs to the 30 kDa lipoprotein family. As to expression, detected in larval hemolymph (at protein level).

The protein localises to the secreted. In Bombyx mori (Silk moth), this protein is Low molecular mass lipoprotein 3.